We begin with the raw amino-acid sequence, 900 residues long: Exosome complex component 10 homolog (900 aa).

2 disordered regions span residues 1 to 31 and 147 to 174; these read MPRTPKRVHQEAKEESAQADQPPKKSASEDV and TSIEPAVASPQTQGTPKAGSWNRTTGTP. A compositionally biased stretch (basic and acidic residues) spans 8–28; that stretch reads VHQEAKEESAQADQPPKKSAS. The 3'-5' exonuclease domain occupies 273–438; sequence VVDTVEKLKQ…YVYGRMTNDL (166 aa). Mg(2+) is bound by residues Asp-296, Glu-298, Asp-354, and Asp-423. An HRDC domain is found at 485-565; the sequence is DNRQLYALRG…LKARDQPLVK (81 aa). Residues 731-900 form a disordered region; it reads EQLKRKHPQA…FSNVRKEGKK (170 aa). A compositionally biased stretch (basic residues) spans 809 to 826; sequence RKQKKNQFQRGFKAKNRG. Over residues 878–887 the composition is skewed to low complexity; sequence NNRNNKQFNK.

The protein belongs to the exosome component 10/RRP6 family. As to quaternary structure, component of the RNA exosome complex. Interacts with spn-A/Rad51; the interaction is required for the recruitment of spn-A to the DNA-damage response foci. Interacts with Su(var)3-9, a heterochromatin factor; the interaction promotes association of Rrp6 with a subset of genomic loci. Interacts with Su(var)205, a heterochromatin factor. Interacts with HDAC1, a heterochromatin factor. Mg(2+) is required as a cofactor. In terms of tissue distribution, salivary gland (at protein level).

Its subcellular location is the nucleus. It localises to the chromosome. It is found in the cytoplasm. The protein resides in the cell cortex. The protein localises to the cytoskeleton. Its subcellular location is the microtubule organizing center. It localises to the centrosome. It is found in the spindle. The protein resides in the midbody. Its function is as follows. Catalytic component of the RNA exosome complex which has 3'-&gt;5' exoribonuclease activity and participates in a multitude of cellular RNA processing and degradation events. Degrades a large variety of non-coding RNAs that are processed by the exosome, such as pre-rRNAs and some small nucleolar RNAs (snoRNAs). Degrades transcripts derived from different types of heterochromatic repeats, such as subtelomeric minisatellites and simple gagaa repeats. Degrades transcripts derived from transposons and transposon fragments. Degrades chromatin-associated transcripts and contributes to the compaction of heterochromatin. Required for the efficient repair of DNA double-strand breaks via homologous recombination after irradiation. Required for cell proliferation and error-free mitosis. The protein is Exosome complex component 10 homolog of Drosophila melanogaster (Fruit fly).